The following is a 111-amino-acid chain: uncharacterized protein (111 aa).

Helical transmembrane passes span 4-23 (LHQVLIACVIGGIMGILGHV), 39-61 (IYLGFLEDWFIGMTASILLVLSA), and 65-84 (SGIQLVILSIISGYGGEAVL).

The protein localises to the cell membrane. This is an uncharacterized protein from Bacillus subtilis (strain 168).